Reading from the N-terminus, the 896-residue chain is Alanine--tRNA ligase (896 aa).

Zn(2+) contacts are provided by His-574, His-578, Cys-677, and His-681.

This sequence belongs to the class-II aminoacyl-tRNA synthetase family. The cofactor is Zn(2+).

The protein resides in the cytoplasm. It catalyses the reaction tRNA(Ala) + L-alanine + ATP = L-alanyl-tRNA(Ala) + AMP + diphosphate. In terms of biological role, catalyzes the attachment of alanine to tRNA(Ala) in a two-step reaction: alanine is first activated by ATP to form Ala-AMP and then transferred to the acceptor end of tRNA(Ala). Also edits incorrectly charged Ser-tRNA(Ala) and Gly-tRNA(Ala) via its editing domain. In Mycoplasma capricolum subsp. capricolum (strain California kid / ATCC 27343 / NCTC 10154), this protein is Alanine--tRNA ligase.